The following is a 389-amino-acid chain: MKIYQDIYPISKPSQIFAILPFYSGDVDDGFRFGGLGRWYGRLVALIILIGSLTLGEDVLFASKEYRLVASAQGDTEEINRTIETLLCIISYTMVVLSSVQNASRHFRTLHDIAKIDEYLLANGFRETYSCRNLTILVTSAAGGVLAVAFYYIHYRSGIGAKRQIILLLIYFLQLLYSTLLALYLRTLMMNLAQRIGFLNQKLDTFNLQDCGHMENWRELSNLIEVLCKFRYITENINCVAGVSLLFYFGFSFYTVTNQSYLAFATLTAGSLSSKTEVADTIGLSCIWVLAETITMIVICSACDGLASEVNGTAQILARIYGKSKQFQNLIDKFLTKSIKQDLQFTAYGFFSIDNSTLFKIFSAVTTYLVILIQFKQLEDSKVEDISQA.

The Cytoplasmic segment spans residues 1-42 (MKIYQDIYPISKPSQIFAILPFYSGDVDDGFRFGGLGRWYGR). Residues 43 to 63 (LVALIILIGSLTLGEDVLFAS) form a helical membrane-spanning segment. Over 64–82 (KEYRLVASAQGDTEEINRT) the chain is Extracellular. An N-linked (GlcNAc...) asparagine glycan is attached at Asn-80. A helical transmembrane segment spans residues 83–103 (IETLLCIISYTMVVLSSVQNA). The Cytoplasmic segment spans residues 104–133 (SRHFRTLHDIAKIDEYLLANGFRETYSCRN). Residues 134 to 154 (LTILVTSAAGGVLAVAFYYIH) form a helical membrane-spanning segment. Topologically, residues 155-164 (YRSGIGAKRQ) are extracellular. A helical membrane pass occupies residues 165 to 185 (IILLLIYFLQLLYSTLLALYL). Residues 186–236 (RTLMMNLAQRIGFLNQKLDTFNLQDCGHMENWRELSNLIEVLCKFRYITEN) lie on the Cytoplasmic side of the membrane. The chain crosses the membrane as a helical span at residues 237-257 (INCVAGVSLLFYFGFSFYTVT). N-linked (GlcNAc...) asparagine glycosylation is present at Asn-258. The Extracellular portion of the chain corresponds to 258–281 (NQSYLAFATLTAGSLSSKTEVADT). A helical transmembrane segment spans residues 282 to 302 (IGLSCIWVLAETITMIVICSA). Over 303–352 (CDGLASEVNGTAQILARIYGKSKQFQNLIDKFLTKSIKQDLQFTAYGFFS) the chain is Cytoplasmic. A helical membrane pass occupies residues 353 to 373 (IDNSTLFKIFSAVTTYLVILI). The Extracellular segment spans residues 374 to 389 (QFKQLEDSKVEDISQA).

The protein belongs to the insect chemoreceptor superfamily. Gustatory receptor (GR) family. Gr21a subfamily. In terms of tissue distribution, expressed in chemosensory neurons of about 20 male-specific gustatory bristles in the forelegs. No expression is seen in the mechanosensory neurons. In larvae, expressed in the ventral pharyngeal sense organ.

It localises to the cell membrane. In terms of biological role, dsx-dependent essential component of pheromone-driven courtship behavior. Recognizes a female pheromone involved in the second step (tapping step) of the courtship display which is essential for efficient execution of the entire courtship sequence and timely mating. Required for detection of the male sex pheromone CH503 which is transferred from males to females during mating and inhibits courtship behavior by other males. Gr68a-expressing neurons in the male foreleg relay signals to the suboesophageal zone (SEZ) and courtship suppression is mediated by the release of the neuropeptide tachykinin from a cluster of 8-10 neurons in the SEZ. The polypeptide is Gustatory receptor 68a (Gr68a) (Drosophila melanogaster (Fruit fly)).